The chain runs to 256 residues: 5-keto-4-deoxy-D-glucarate aldolase (256 aa).

His50 (proton acceptor) is an active-site residue. Gln151 contributes to the substrate binding site. Glu153 contributes to the Mg(2+) binding site. Residues Ser178 and Asp179 each coordinate substrate. Position 179 (Asp179) interacts with Mg(2+).

Belongs to the HpcH/HpaI aldolase family. KDGluc aldolase subfamily. Homohexamer; trimer of dimers. It depends on Mg(2+) as a cofactor.

It carries out the reaction 5-dehydro-4-deoxy-D-glucarate = 2-hydroxy-3-oxopropanoate + pyruvate. The enzyme catalyses 2-dehydro-3-deoxy-D-glucarate = 2-hydroxy-3-oxopropanoate + pyruvate. The protein operates within carbohydrate acid metabolism; galactarate degradation; D-glycerate from galactarate: step 2/3. Its function is as follows. Catalyzes the reversible retro-aldol cleavage of both 5-keto-4-deoxy-D-glucarate and 2-keto-3-deoxy-D-glucarate to pyruvate and tartronic semialdehyde. The polypeptide is 5-keto-4-deoxy-D-glucarate aldolase (Escherichia coli O6:H1 (strain CFT073 / ATCC 700928 / UPEC)).